A 338-amino-acid chain; its full sequence is MALQRRTTLTKYLIEQQRETNNLPADLRLLIEVVARACKAISYHVSKGALGDALGTAGSENVQGEVQKKLDILSNEILLEANEWGGNLAGMASEEMEQFFPIPANYPKGEYLLVFDPLDGSSNIDVNVSIGTIFSVLRCPDGQQPTEQSFLQPGTQQVAAGYAVYGPQTVLVLTTGNGVNCFTLDRELGSWVLTQSDMRIPVETREYAINASNERHWYPPVQQYIGELKDGKEGSRQSDFNMRWIASMVADVHRILNRGGIFMYPADKRTPDKPGKLRLMYEANPMAFIVEQAGGAATNGEKRILDIQPKSLHERVAVFLGSKNEVDRVTRYHLETKK.

4 residues coordinate Mg(2+): E94, D116, L118, and D119. Substrate is bound by residues 119-122, N210, and K276; that span reads DGSS. E282 is a Mg(2+) binding site.

The protein belongs to the FBPase class 1 family. In terms of assembly, homotetramer. The cofactor is Mg(2+).

It localises to the cytoplasm. It catalyses the reaction beta-D-fructose 1,6-bisphosphate + H2O = beta-D-fructose 6-phosphate + phosphate. The protein operates within carbohydrate biosynthesis; gluconeogenesis. The protein is Fructose-1,6-bisphosphatase class 1 1 of Paraburkholderia xenovorans (strain LB400).